A 260-amino-acid chain; its full sequence is Ribonuclease HII (260 aa).

In terms of domain architecture, RNase H type-2 spans 73-260 (LHIAGIDEAG…APVQQQLDIV (188 aa)). A divalent metal cation-binding residues include aspartate 79, glutamate 80, and aspartate 171.

Belongs to the RNase HII family. Mn(2+) is required as a cofactor. The cofactor is Mg(2+).

It localises to the cytoplasm. The enzyme catalyses Endonucleolytic cleavage to 5'-phosphomonoester.. Functionally, endonuclease that specifically degrades the RNA of RNA-DNA hybrids. The chain is Ribonuclease HII from Desulfitobacterium hafniense (strain DSM 10664 / DCB-2).